The chain runs to 482 residues: Cobyric acid synthase (482 aa).

A GATase cobBQ-type domain is found at 243 to 430; it reads ACKVVVPQLE…LHGLFTSDAF (188 aa). Cys325 serves as the catalytic Nucleophile. Residue His422 is part of the active site.

This sequence belongs to the CobB/CobQ family. CobQ subfamily.

The protein operates within cofactor biosynthesis; adenosylcobalamin biosynthesis. In terms of biological role, catalyzes amidations at positions B, D, E, and G on adenosylcobyrinic A,C-diamide. NH(2) groups are provided by glutamine, and one molecule of ATP is hydrogenolyzed for each amidation. The chain is Cobyric acid synthase from Ruegeria sp. (strain TM1040) (Silicibacter sp.).